A 278-amino-acid chain; its full sequence is S-formylglutathione hydrolase YeiG (278 aa).

Catalysis depends on charge relay system residues S145, D223, and H256.

This sequence belongs to the esterase D family.

It carries out the reaction S-formylglutathione + H2O = formate + glutathione + H(+). In terms of biological role, serine hydrolase involved in the detoxification of formaldehyde. Hydrolyzes S-formylglutathione to glutathione and formate. The polypeptide is S-formylglutathione hydrolase YeiG (yeiG) (Escherichia coli O6:K15:H31 (strain 536 / UPEC)).